Reading from the N-terminus, the 351-residue chain is Probable cell division control protein 7 homolog 2 (351 aa).

The region spanning 21–341 is the Protein kinase domain; that stretch reads YTPIEKIGEG…ASDALSHPFF (321 aa). Residues 27–35 and Lys-50 contribute to the ATP site; that span reads IGEGSFSVV. The active-site Proton acceptor is Asp-137.

This sequence belongs to the protein kinase superfamily. Ser/Thr protein kinase family. CDC7 subfamily. Mg(2+) is required as a cofactor.

The enzyme catalyses L-seryl-[protein] + ATP = O-phospho-L-seryl-[protein] + ADP + H(+). The catalysed reaction is L-threonyl-[protein] + ATP = O-phospho-L-threonyl-[protein] + ADP + H(+). Serine/threonine-protein kinase. Needed for the initiation of DNA synthesis during mitosis as well as for synaptonemal complex formation and commitment to recombination during meiosis. This is Probable cell division control protein 7 homolog 2 (CDC7-2) from Encephalitozoon cuniculi (strain GB-M1) (Microsporidian parasite).